A 1461-amino-acid chain; its full sequence is Gag-Pol polyprotein (1461 aa).

Gly-2 is lipidated: N-myristoyl glycine; by host. Positions 7-31 are interaction with Gp41; sequence VLRGKKADELEKIRLRPGGKKKYKL. Residues 16–22 carry the Nuclear export signal motif; that stretch reads LEKIRLR. Residues 26-32 carry the Nuclear localization signal motif; sequence KKKYKLK. The interval 189 to 226 is interaction with human PPIA/CYPA and NUP153; sequence NCVGDHQAAMQIIREIINEEAADWDVAHPIPGPLPAGQ. Positions 277-363 are dimerization/Multimerization of capsid protein p24; that stretch reads YNPTNILDIN…GGPGQKARLM (87 aa). 2 consecutive CCHC-type zinc fingers follow at residues 387 to 404 and 408 to 425; these read FKCW…QWSA and QGCW…NCPD. Residues 436-467 form a disordered region; it reads LGKEGPQLPRGPSPAGANTNSTPIGSSSGPTG. The span at 453–467 shows a compositional bias: low complexity; it reads NTNSTPIGSSSGPTG. The dimerization of protease stretch occupies residues 511–515; the sequence is PQFSL. The Peptidase A2 domain occupies 530 to 599; the sequence is VEVLLDTRAN…TPINIFGRNV (70 aa). Asp-535 acts as the For protease activity; shared with dimeric partner in catalysis. Dimerization of protease stretches follow at residues 559–565 and 598–610; these read GIGGFIN and NVLT…LNLP. In terms of domain architecture, Reverse transcriptase spans 653–843; sequence EGQLEEAPPT…PPYRWMGYEL (191 aa). The Mg(2+) site is built by Asp-719, Asp-794, and Asp-795. Residues 836-844 form an RT 'primer grip' region; sequence YRWMGYELW. The short motif at 1006 to 1022 is the Tryptophan repeat motif element; the sequence is WEQWWDNYWQVTWIPDW. In terms of domain architecture, RNase H type-1 spans 1042–1165; the sequence is VPGAETFYTD…VDHLVSQGIR (124 aa). Mg(2+) contacts are provided by Asp-1051, Glu-1086, Asp-1106, and Asp-1157. The Integrase-type; degenerate zinc-finger motif lies at 1171–1212; that stretch reads EKIEPAQEEHEKYHSNIKELSHKFGIPKLVARQIVNTCAHVQ. Residues 1221-1372 enclose the Integrase catalytic domain; sequence QVNAELGTWQ…TPAERIINMI (152 aa). Positions 1232, 1284, and 1320 each coordinate Mg(2+). Positions 1391-1438 form a DNA-binding region, integrase-type; the sequence is FRVYFREGRDQLWKGPGELLWKGDGAVIVKVGTEIKVVPRRKAKIIKD.

Homotrimer; further assembles as hexamers of trimers. Interacts with gp41 (via C-terminus). Interacts with host CALM1; this interaction induces a conformational change in the Matrix protein, triggering exposure of the myristate group. Interacts with host AP3D1; this interaction allows the polyprotein trafficking to multivesicular bodies during virus assembly. Part of the pre-integration complex (PIC) which is composed of viral genome, matrix protein, Vpr and integrase. As to quaternary structure, homodimer; the homodimer further multimerizes as homohexamers or homopentamers. Interacts with human PPIA/CYPA. Interacts with human NUP153. Interacts with host PDZD8; this interaction stabilizes the capsid. Interacts with monkey TRIM5; this interaction destabilizes the capsid. In terms of assembly, homodimer, whose active site consists of two apposed aspartic acid residues. Heterodimer of p66 RT and p51 RT (RT p66/p51). Heterodimerization of RT is essential for DNA polymerase activity. The overall folding of the subdomains is similar in p66 RT and p51 RT but the spatial arrangements of the subdomains are dramatically different. As to quaternary structure, homotetramer; may further associate as a homohexadecamer. Part of the pre-integration complex (PIC) which is composed of viral genome, matrix protein, Vpr and integrase. Interacts with human SMARCB1/INI1 and human PSIP1/LEDGF isoform 1. Interacts with human KPNA3; this interaction might play a role in nuclear import of the pre-integration complex. Interacts with human NUP153; this interaction might play a role in nuclear import of the pre-integration complex. The cofactor is Mg(2+). In terms of processing, specific enzymatic cleavages by the viral protease yield mature proteins. The protease is released by autocatalytic cleavage. The polyprotein is cleaved during and after budding, this process is termed maturation. Proteolytic cleavage of p66 RT removes the RNase H domain to yield the p51 RT subunit. Nucleocapsid protein p7 might be further cleaved after virus entry.

The protein localises to the host cell membrane. The protein resides in the host endosome. Its subcellular location is the host multivesicular body. It is found in the virion membrane. It localises to the host nucleus. The protein localises to the host cytoplasm. The protein resides in the virion. The enzyme catalyses Endopeptidase for which the P1 residue is preferably hydrophobic.. It carries out the reaction Endohydrolysis of RNA in RNA/DNA hybrids. Three different cleavage modes: 1. sequence-specific internal cleavage of RNA. Human immunodeficiency virus type 1 and Moloney murine leukemia virus enzymes prefer to cleave the RNA strand one nucleotide away from the RNA-DNA junction. 2. RNA 5'-end directed cleavage 13-19 nucleotides from the RNA end. 3. DNA 3'-end directed cleavage 15-20 nucleotides away from the primer terminus.. It catalyses the reaction 3'-end directed exonucleolytic cleavage of viral RNA-DNA hybrid.. The catalysed reaction is DNA(n) + a 2'-deoxyribonucleoside 5'-triphosphate = DNA(n+1) + diphosphate. Protease: The viral protease is inhibited by many synthetic protease inhibitors (PIs), such as amprenavir, atazanavir, indinavir, loprinavir, nelfinavir, ritonavir and saquinavir. Use of protease inhibitors in tritherapy regimens permit more ambitious therapeutic strategies. Reverse transcriptase/ribonuclease H: RT can be inhibited either by nucleoside RT inhibitors (NRTIs) or by non nucleoside RT inhibitors (NNRTIs). NRTIs act as chain terminators, whereas NNRTIs inhibit DNA polymerization by binding a small hydrophobic pocket near the RT active site and inducing an allosteric change in this region. Classical NRTIs are abacavir, adefovir (PMEA), didanosine (ddI), lamivudine (3TC), stavudine (d4T), tenofovir (PMPA), zalcitabine (ddC), and zidovudine (AZT). Classical NNRTIs are atevirdine (BHAP U-87201E), delavirdine, efavirenz (DMP-266), emivirine (I-EBU), and nevirapine (BI-RG-587). The tritherapies used as a basic effective treatment of AIDS associate two NRTIs and one NNRTI. Mediates, with Gag polyprotein, the essential events in virion assembly, including binding the plasma membrane, making the protein-protein interactions necessary to create spherical particles, recruiting the viral Env proteins, and packaging the genomic RNA via direct interactions with the RNA packaging sequence (Psi). Gag-Pol polyprotein may regulate its own translation, by the binding genomic RNA in the 5'-UTR. At low concentration, the polyprotein would promote translation, whereas at high concentration, the polyprotein would encapsidate genomic RNA and then shut off translation. Its function is as follows. Targets the polyprotein to the plasma membrane via a multipartite membrane-binding signal, that includes its myristoylated N-terminus. Matrix protein is part of the pre-integration complex. Implicated in the release from host cell mediated by Vpu. Binds to RNA. In terms of biological role, forms the conical core that encapsulates the genomic RNA-nucleocapsid complex in the virion. Most core are conical, with only 7% tubular. The core is constituted by capsid protein hexamer subunits. The core is disassembled soon after virion entry. Host restriction factors such as TRIM5-alpha or TRIMCyp bind retroviral capsids and cause premature capsid disassembly, leading to blocks in reverse transcription. Capsid restriction by TRIM5 is one of the factors which restricts HIV-1 to the human species. Host PIN1 apparently facilitates the virion uncoating. On the other hand, interactions with PDZD8 or CYPA stabilize the capsid. Functionally, encapsulates and protects viral dimeric unspliced genomic RNA (gRNA). Binds these RNAs through its zinc fingers. Acts as a nucleic acid chaperone which is involved in rearangement of nucleic acid secondary structure during gRNA retrotranscription. Also facilitates template switch leading to recombination. As part of the polyprotein, participates in gRNA dimerization, packaging, tRNA incorporation and virion assembly. Aspartyl protease that mediates proteolytic cleavages of Gag and Gag-Pol polyproteins during or shortly after the release of the virion from the plasma membrane. Cleavages take place as an ordered, step-wise cascade to yield mature proteins. This process is called maturation. Displays maximal activity during the budding process just prior to particle release from the cell. Also cleaves Nef and Vif, probably concomitantly with viral structural proteins on maturation of virus particles. Hydrolyzes host EIF4GI and PABP1 in order to shut off the capped cellular mRNA translation. The resulting inhibition of cellular protein synthesis serves to ensure maximal viral gene expression and to evade host immune response. Its function is as follows. Multifunctional enzyme that converts the viral RNA genome into dsDNA in the cytoplasm, shortly after virus entry into the cell. This enzyme displays a DNA polymerase activity that can copy either DNA or RNA templates, and a ribonuclease H (RNase H) activity that cleaves the RNA strand of RNA-DNA heteroduplexes in a partially processive 3' to 5' endonucleasic mode. Conversion of viral genomic RNA into dsDNA requires many steps. A tRNA(3)-Lys binds to the primer-binding site (PBS) situated at the 5'-end of the viral RNA. RT uses the 3' end of the tRNA primer to perform a short round of RNA-dependent minus-strand DNA synthesis. The reading proceeds through the U5 region and ends after the repeated (R) region which is present at both ends of viral RNA. The portion of the RNA-DNA heteroduplex is digested by the RNase H, resulting in a ssDNA product attached to the tRNA primer. This ssDNA/tRNA hybridizes with the identical R region situated at the 3' end of viral RNA. This template exchange, known as minus-strand DNA strong stop transfer, can be either intra- or intermolecular. RT uses the 3' end of this newly synthesized short ssDNA to perform the RNA-dependent minus-strand DNA synthesis of the whole template. RNase H digests the RNA template except for two polypurine tracts (PPTs) situated at the 5'-end and near the center of the genome. It is not clear if both polymerase and RNase H activities are simultaneous. RNase H probably can proceed both in a polymerase-dependent (RNA cut into small fragments by the same RT performing DNA synthesis) and a polymerase-independent mode (cleavage of remaining RNA fragments by free RTs). Secondly, RT performs DNA-directed plus-strand DNA synthesis using the PPTs that have not been removed by RNase H as primers. PPTs and tRNA primers are then removed by RNase H. The 3' and 5' ssDNA PBS regions hybridize to form a circular dsDNA intermediate. Strand displacement synthesis by RT to the PBS and PPT ends produces a blunt ended, linear dsDNA copy of the viral genome that includes long terminal repeats (LTRs) at both ends. In terms of biological role, catalyzes viral DNA integration into the host chromosome, by performing a series of DNA cutting and joining reactions. This enzyme activity takes place after virion entry into a cell and reverse transcription of the RNA genome in dsDNA. The first step in the integration process is 3' processing. This step requires a complex comprising the viral genome, matrix protein, Vpr and integrase. This complex is called the pre-integration complex (PIC). The integrase protein removes 2 nucleotides from each 3' end of the viral DNA, leaving recessed CA OH's at the 3' ends. In the second step, the PIC enters cell nucleus. This process is mediated through integrase and Vpr proteins, and allows the virus to infect a non dividing cell. This ability to enter the nucleus is specific of lentiviruses, other retroviruses cannot and rely on cell division to access cell chromosomes. In the third step, termed strand transfer, the integrase protein joins the previously processed 3' ends to the 5' ends of strands of target cellular DNA at the site of integration. The 5'-ends are produced by integrase-catalyzed staggered cuts, 5 bp apart. A Y-shaped, gapped, recombination intermediate results, with the 5'-ends of the viral DNA strands and the 3' ends of target DNA strands remaining unjoined, flanking a gap of 5 bp. The last step is viral DNA integration into host chromosome. This involves host DNA repair synthesis in which the 5 bp gaps between the unjoined strands are filled in and then ligated. Since this process occurs at both cuts flanking the HIV genome, a 5 bp duplication of host DNA is produced at the ends of HIV-1 integration. Alternatively, Integrase may catalyze the excision of viral DNA just after strand transfer, this is termed disintegration. The chain is Gag-Pol polyprotein (gag-pol) from Homo sapiens (Human).